A 661-amino-acid chain; its full sequence is Protein WHI3 (661 aa).

The segment covering 14-31 has biased composition (low complexity); sequence ASSSDNVVSSTTNTHNIS. A disordered region spans residues 14–58; the sequence is ASSSDNVVSSTTNTHNISPSHRSSLNLNTTSHPHEASGRGSASGE. Residues 32-44 are compositionally biased toward polar residues; it reads PSHRSSLNLNTTS. The residue at position 231 (Ser-231) is a Phosphoserine. Low complexity-rich tracts occupy residues 237–272, 383–409, and 496–508; these read DPFS…SPQQ, NTSA…SASS, and KNNS…SNIT. 4 disordered regions span residues 237-280, 383-410, 469-508, and 613-661; these read DPFS…QVNS, NTSA…ASSQ, EHMY…SNIT, and SSKG…HIKN. One can recognise an RRM domain in the interval 538 to 625; it reads NTLYVGNLPS…GGIRLSFSKN (88 aa). Residues 628-647 show a composition bias toward low complexity; the sequence is GVRGPNSRRGGSGNPNPNVN. Residues 648–661 are compositionally biased toward polar residues; the sequence is MLSSYNSNVGHIKN.

Functionally, involved in size control and cell cycle. This chain is Protein WHI3 (WHI3), found in Saccharomyces cerevisiae (strain ATCC 204508 / S288c) (Baker's yeast).